We begin with the raw amino-acid sequence, 444 residues long: Phosphoglucosamine mutase (444 aa).

Residue Ser104 is the Phosphoserine intermediate of the active site. Residues Ser104, Asp243, Asp245, and Asp247 each coordinate Mg(2+). At Ser104 the chain carries Phosphoserine.

It belongs to the phosphohexose mutase family. It depends on Mg(2+) as a cofactor. Activated by phosphorylation.

It carries out the reaction alpha-D-glucosamine 1-phosphate = D-glucosamine 6-phosphate. In terms of biological role, catalyzes the conversion of glucosamine-6-phosphate to glucosamine-1-phosphate. This is Phosphoglucosamine mutase from Neisseria meningitidis serogroup B (strain ATCC BAA-335 / MC58).